Here is a 278-residue protein sequence, read N- to C-terminus: Envelope glycoprotein L (278 aa).

The signal sequence occupies residues 1-30; it reads MCRRPDCGFSFSPGPVILLWCCLLLPIVSS. The gL betaherpesvirus-type domain occupies 43–256; sequence VPAECPELTR…DKYYAGLPPE (214 aa). Cys-154 and Cys-159 are oxidised to a cystine.

It belongs to the herpesviridae glycoprotein L (gL) family. Betaherpesvirinae gL subfamily. Interacts with glycoprotein H (gH); this interaction is necessary for the correct processing and cell surface expression of gH. Forms the envelope pentamer complex (PC) composed of gH, gL, UL128, UL130, and UL131A. The pentamer interacts with host NRP2. Forms the envelope trimer complex composed of gH, gL, and gO. The trimer interacts with host PDGFRA. The trimer also interacts with host EPHA2.

Its subcellular location is the virion membrane. The protein resides in the host cell membrane. The protein localises to the host Golgi apparatus. It is found in the host trans-Golgi network. Its function is as follows. The heterodimer glycoprotein H-glycoprotein L is required for the fusion of viral and plasma membranes leading to virus entry into the host cell. Acts as a functional inhibitor of gH and maintains gH in an inhibited form. Upon binding to host integrins, gL dissociates from gH leading to activation of the viral fusion glycoproteins gB and gH. In human cytomegalovirus, forms two distincts complexes to mediate viral entry, a trimer and a pentamer at the surface of the virion envelope. The gH-gL-gO trimer is required for infection in fibroblasts by interacting with host PDGFRA, and in glioblastoma cells by interacting with host EPHA2. The gH-gL-UL128-UL130-UL131A pentamer is essential for viral entry in epithelial, endothelial and myeloid cells via interaction with host NRP2. The polypeptide is Envelope glycoprotein L (Human cytomegalovirus (strain 5035) (HHV-5)).